A 320-amino-acid polypeptide reads, in one-letter code: MASILRSVATTSAVVAAASAIPIAIAFSSSSSSSSTNPKSQSLNFSFLSRSSPRLLGLSRSFVSSPMATALTSDRNLHQEDRAMPQLLTEFMVDMTCEGCVNAVKNKLETIEGIEKVEVDLSNQVVRILGSSPVKAMTQALEQTGRKARLIGQGVPQDFLVSAAVAEFKGPDIFGVVRFAQVSMELARIEANFTGLSPGTHSWCINEYGDLTNGAASTGSLYNPFQDQTGTEPLGDLGTLEADKNGEAFYSGKKEKLKVADLIGRAVVVYKTDDNKSGPGLTAAVIARSAGVGENYKKLCSCDGTVIWEATNSDFVASKV.

The transit peptide at 1–67 (MASILRSVAT…LSRSFVSSPM (67 aa)) directs the protein to the chloroplast. Residues 86–149 (QLLTEFMVDM…ALEQTGRKAR (64 aa)) enclose the HMA domain. Cu cation is bound by residues Cys97, Cys100, Cys300, and Cys302.

The protein in the C-terminal section; belongs to the Cu-Zn superoxide dismutase family. In terms of assembly, interacts with CSD1. Cu(2+) serves as cofactor. Expressed in roots, shoots, stems and flowers, and at lower levels in rosette and cauline leaves.

The protein resides in the plastid. It is found in the chloroplast. It localises to the cytoplasm. The protein localises to the cytosol. Its function is as follows. Copper chaperone for the superoxide dismutases CSD1, CSD2 and CSD3. Binds copper ions and delivers them specifically to CSDs. Is required for assistance in CSDs disulfide bond formation and thereby activation of CSDs. May be involved in the negative regulation of heat stress-responsive genes and thermotolerance. The chain is Copper chaperone for superoxide dismutase, chloroplastic/cytosolic (CCS) from Arabidopsis thaliana (Mouse-ear cress).